A 225-amino-acid polypeptide reads, in one-letter code: MLPARPEPLPVDPKTTAVIVIDMQNAYASPGGYLDLAGFDISGAAKVTHEIKGVLEVARSAGMTVIYFQNGWDDGYVEAGGPGSPNWWKSNALKTMRARPELQGKLLARGQWDYELVDDLTPQPGDIRLHKTRYSGFFNSQLDSVLRARGIRHLVFTGIATNVCVESTLRDGFMLEYFGTVLEDATHQAGPDFVQKAALFNIETFFGWVSTTADFKGTFGQLAPG.

Asp-22 (proton acceptor) is an active-site residue. Lys-131 is a catalytic residue. Catalysis depends on Cys-164, which acts as the Nucleophile.

It belongs to the isochorismatase family. RutB subfamily.

The enzyme catalyses (Z)-3-ureidoacrylate + H2O + H(+) = (Z)-3-aminoacrylate + NH4(+) + CO2. The catalysed reaction is (Z)-3-ureidoacrylate + H2O = (Z)-3-aminoacrylate + carbamate + H(+). It catalyses the reaction (Z)-2-methylureidoacrylate + H2O + H(+) = (Z)-2-methylaminoacrylate + NH4(+) + CO2. Functionally, hydrolyzes ureidoacrylate to form aminoacrylate and carbamate. The carbamate hydrolyzes spontaneously, thereby releasing one of the nitrogen atoms of the pyrimidine ring as ammonia and one of its carbon atoms as CO2. The chain is Ureidoacrylate amidohydrolase RutB from Caulobacter vibrioides (strain ATCC 19089 / CIP 103742 / CB 15) (Caulobacter crescentus).